The chain runs to 383 residues: UDP-N-acetylglucosamine--N-acetylmuramyl-(pentapeptide) pyrophosphoryl-undecaprenol N-acetylglucosamine transferase (383 aa).

UDP-N-acetyl-alpha-D-glucosamine contacts are provided by residues 10-12 (TGG), Asn-124, Arg-165, Ser-190, Ile-245, and Gln-290. Residues 364-383 (PFGQAREPGQKPARPPDLAS) are disordered.

Belongs to the glycosyltransferase 28 family. MurG subfamily.

The protein localises to the cell inner membrane. The enzyme catalyses di-trans,octa-cis-undecaprenyl diphospho-N-acetyl-alpha-D-muramoyl-L-alanyl-D-glutamyl-meso-2,6-diaminopimeloyl-D-alanyl-D-alanine + UDP-N-acetyl-alpha-D-glucosamine = di-trans,octa-cis-undecaprenyl diphospho-[N-acetyl-alpha-D-glucosaminyl-(1-&gt;4)]-N-acetyl-alpha-D-muramoyl-L-alanyl-D-glutamyl-meso-2,6-diaminopimeloyl-D-alanyl-D-alanine + UDP + H(+). Its pathway is cell wall biogenesis; peptidoglycan biosynthesis. Functionally, cell wall formation. Catalyzes the transfer of a GlcNAc subunit on undecaprenyl-pyrophosphoryl-MurNAc-pentapeptide (lipid intermediate I) to form undecaprenyl-pyrophosphoryl-MurNAc-(pentapeptide)GlcNAc (lipid intermediate II). In Anaeromyxobacter sp. (strain K), this protein is UDP-N-acetylglucosamine--N-acetylmuramyl-(pentapeptide) pyrophosphoryl-undecaprenol N-acetylglucosamine transferase.